The chain runs to 1179 residues: MFSIDIQGKSMSLCDPTSKIKQMQQQQQQLQQGTNNGIQKDQQLPNMIINGNSNSYLNNGSNLQQQAVIQQSNHKQSQIKYNSPLSHQQHHQFKIGHQNKLEYLRQQQAQKYNQIYQLDPQLQQQNQMFQQHQYMQNVQMQQQLLYQGNQEVFPPFNQIANGSAQNSILLQQYLSNNKGQTNNSNRENGGNFHSEQSPKSAAGSVVSGNGSNTQFAANILRNSNIIQQQNEFRFQQIQQTHQLLHSLVQQQPQPLSQQHSNQSSQSSNPQSQSPLPLSISSQQPVISMANYFNQPSQQSNSLFNGQQPTMFNSSENFQQKNILYSCVGNPNNPYNHHINNPYLQEKRYYKSSKLPKIKKENKPQQAFSDIRPSSREKSARFHLAASINTILNQNGSTSVNTQNNENMVQTLKGHSYSAVTEKSNIGQQEVNIPTTSKTQTLIKEHSLTNINSASKENNQVTLASNSNQTSKKAYENLMSAENDEEDKLKCIRYFRYNLGQLLHILGKKEIYFSNLNSKKPIKTFASITQQLGQKHMNLLSKNTINIINKVKKIVATKGKYKYRERFNFLHSAQLKSINYDVRKRLNQIQDKKVLSNTKSKDEEESSDDDETPVKSKSNNQNAVQQTDLAKWKKYNRLDPKTKVFIIKGGYGDLRKALQERGWVENPDYFSPCFDLKWTCKVQDIDYDNLQENQVVNHFDNNQTFTSKYGLARNLRTLIHSENIDVYKFFPRCFDLGDLQEFEDFIENFKVAKAESLVHRFKDMLKNGIESIDDKLELKIRLCNEVASRKFIDFYETVDFIFNYDVLPCVSPEEWEIISKDEFQLDNKKIEFYLERLRSHPTFKHLYYSNSQSQKQHMNKRKNSHRISVNHNHNDPIEEESAQSSTSLKQDSLQRFSSKSQELLDLCNQTLKKSSEKDPQHHLNGYRNIWIVKPNFLSRGRGIKCFNSLDKIMDYVVGKETQFVVQKYIENPLLINNKKFDMRQWAIVQDFCPPRIWFFEECYIRLCSVEHNIDDLNNRFVHLTNNIVQKYNKDAYADKDDLMMSQEQFAQYLKETEGRDVFYEEIQPKLKQMVIQSLKSCQDQVGARKNSMEFIGYDFMIDSNYQPWLIEINSSPSMEYSTSITEELVQRVLQDTTKVIVDYSMAKKGTKKNVDTGGFKLIYKGEKQTKNNKVLASYKK.

The segment covering 177–199 has biased composition (polar residues); the sequence is NKGQTNNSNRENGGNFHSEQSPK. 4 disordered regions span residues 177-208, 250-278, 592-625, and 853-890; these read NKGQ…VVSG, QQPQ…LPLS, KVLS…AVQQ, and QKQH…LKQD. Residues 592–601 show a composition bias toward basic and acidic residues; that stretch reads KVLSNTKSKD. Composition is skewed to polar residues over residues 614–625 and 881–890; these read KSKSNNQNAVQQ and AQSSTSLKQD. Residues 790–1152 form the TTL domain; it reads FIDFYETVDF…SMAKKGTKKN (363 aa). ATP is bound by residues 965-968, K978, and D980; that span reads QKYI.

Its subcellular location is the cell projection. The protein localises to the cilium. It localises to the cytoplasm. The protein resides in the cytoskeleton. It is found in the cilium axoneme. Its function is as follows. Polyglycylase which modifies tubulin, generating side chains of glycine on the gamma-carboxyl groups of specific glutamate residues within the C-terminal tail of tubulin. Polyglycylates tubulin, with a preference for alpha-tubulin toward beta-tubulin. The polypeptide is Tubulin glycylase 3B (TTLL3B) (Tetrahymena thermophila (strain SB210)).